The following is a 461-amino-acid chain: ERBB receptor feedback inhibitor 1 (461 aa).

Ser-2 is subject to N-acetylserine. Phosphothreonine is present on residues Thr-126 and Thr-130. Positions 228 to 353 are disordered; it reads QNRVVPDPNP…VMPPTQSFAP (126 aa). Phosphoserine is present on residues Ser-251 and Ser-272. The span at 265–274 shows a compositional bias: polar residues; that stretch reads SSCTHRASPS. Positions 283–292 are enriched in pro residues; the sequence is PPRVPIPPRP. A Phosphoserine modification is found at Ser-301. Basic and acidic residues predominate over residues 311–324; sequence DEDRPPKVPPREPL. The span at 325-336 shows a compositional bias: polar residues; that stretch reads SRSNSRTPSPKS. The tract at residues 333 to 362 is interaction with EGFR and ERBB2 and regulation of EGFR activation; it reads SPKSLPSYLNGVMPPTQSFAPDPKYVSSKA. The residue at position 460 (Ser-460) is a Phosphoserine.

Belongs to the MIG6 family. As to quaternary structure, interacts with EGFR. Interacts with ERBB2. Detected in lung, in airway epithelial cells and alveolar type 2 cells (at protein level). Detected in uterus stroma, luminal epithelium and glandular epithelium.

It is found in the cytoplasm. It localises to the cell membrane. The protein resides in the nucleus. Functionally, negative regulator of EGFR signaling in skin morphogenesis. Acts as a negative regulator for several EGFR family members, including ERBB2, ERBB3 and ERBB4. Inhibits EGFR catalytic activity by interfering with its dimerization. Inhibits autophosphorylation of EGFR, ERBB2 and ERBB4. Important for normal keratinocyte proliferation and differentiation. Plays a role in modulating the response to steroid hormones in the uterus. Required for normal response to progesterone in the uterus and for fertility. Mediates epithelial estrogen responses in the uterus by regulating ESR1 levels and activation. Important for regulation of endometrium cell proliferation. Important for normal prenatal and perinatal lung development. This Mus musculus (Mouse) protein is ERBB receptor feedback inhibitor 1 (Errfi1).